The chain runs to 2280 residues: Acetyl-CoA carboxylase (2280 aa).

Positions 68–577 (VITSILIANN…TTGWLDRLIA (510 aa)) constitute a Biotin carboxylation domain. One can recognise an ATP-grasp domain in the interval 226–418 (ETNIVTVDDD…LPAAQLQVAM (193 aa)). 266 to 271 (GGGGKG) contacts ATP. The Mn(2+) site is built by Glu-375, Glu-389, and Asn-391. The active site involves Arg-393. Positions 704–778 (LEQENDPTQL…DAGDILGILT (75 aa)) constitute a Biotinyl-binding domain. Lys-745 is subject to N6-biotinyllysine. A phosphoserine mark is found at Ser-1179 and Ser-1181. In terms of domain architecture, CoA carboxyltransferase N-terminal spans 1524 to 1863 (PYPTKEWLQP…KRNNPVPISP (340 aa)). A carboxyltransferase region spans residues 1524-2181 (PYPTKEWLQP…EHYALQKITQ (658 aa)). CoA is bound by residues Arg-1772, Lys-2074, and Arg-2076. The region spanning 1867-2181 (TWDRDVEFYP…EHYALQKITQ (315 aa)) is the CoA carboxyltransferase C-terminal domain.

In terms of assembly, interacts with sad1. The cofactor is biotin. Mn(2+) serves as cofactor.

Its subcellular location is the cytoplasm. The enzyme catalyses hydrogencarbonate + acetyl-CoA + ATP = malonyl-CoA + ADP + phosphate + H(+). It catalyses the reaction N(6)-biotinyl-L-lysyl-[protein] + hydrogencarbonate + ATP = N(6)-carboxybiotinyl-L-lysyl-[protein] + ADP + phosphate + H(+). Its pathway is lipid metabolism; malonyl-CoA biosynthesis; malonyl-CoA from acetyl-CoA: step 1/1. With respect to regulation, by phosphorylation. Carries out three functions: biotin carboxyl carrier protein, biotin carboxylase and carboxyltransferase. In Schizosaccharomyces pombe (strain 972 / ATCC 24843) (Fission yeast), this protein is Acetyl-CoA carboxylase (cut6).